The following is a 114-amino-acid chain: Small ribosomal subunit protein bS6 (114 aa).

Belongs to the bacterial ribosomal protein bS6 family.

Functionally, binds together with bS18 to 16S ribosomal RNA. This Bacteroides thetaiotaomicron (strain ATCC 29148 / DSM 2079 / JCM 5827 / CCUG 10774 / NCTC 10582 / VPI-5482 / E50) protein is Small ribosomal subunit protein bS6.